The following is a 780-amino-acid chain: Kazrin (780 aa).

The stretch at 79-261 forms a coiled coil; it reads AQVLLREEVV…LATLTKDVPK (183 aa). A disordered region spans residues 295–430; sequence QQTLYHSHPP…TRHSLSLSEG (136 aa). Phosphoserine is present on residues serine 357, serine 372, and serine 392. Polar residues predominate over residues 416 to 427; that stretch reads SQCSPTRHSLSL. SAM domains are found at residues 451–516, 529–593, and 617–684; these read WKAG…YRDA, DHHW…LYQV, and WTNQ…STVF. Positions 692–780 are disordered; it reads IRESERFGTP…EYSSLEVTNV (89 aa). Residues 760–771 show a composition bias toward basic and acidic residues; the sequence is LQGRPEQCRLEE.

The protein belongs to the kazrin family.

Its subcellular location is the cell junction. The protein resides in the nucleus. It is found in the cytoplasm. It localises to the cytoskeleton. Component of the cornified envelope of keratinocytes. May be involved in the interplay between adherens junctions and desmosomes. The function in the nucleus is not known. In Rattus norvegicus (Rat), this protein is Kazrin (Kazn).